The chain runs to 257 residues: Serine/arginine-rich splicing factor 1 (257 aa).

Residue S2 is modified to N-acetylserine. Residues 16–91 enclose the RRM 1 domain; the sequence is CRIYVGNLPP…YRLRVEFPRS (76 aa). Positions 88–116 are disordered; it reads FPRSGRGTGRGGGGGGGGGAPRGRYGPPS. The span at 93–108 shows a compositional bias: gly residues; it reads RGTGRGGGGGGGGGAP. Positions 121 to 195 constitute an RRM 2 domain; that stretch reads YRVIVSGLPP…ETAYIRVKVD (75 aa).

It is found in the cytoplasm. It localises to the nucleus speckle. In terms of biological role, may play a role in preventing exon skipping, ensuring the accuracy of splicing and regulating alternative splicing. This is Serine/arginine-rich splicing factor 1 (SRSF1) from Gallus gallus (Chicken).